Here is a 159-residue protein sequence, read N- to C-terminus: Transcriptional repressor NrdR (159 aa).

The tract at residues M1–R26 is disordered. Residues C3 to C34 fold into a zinc finger. Positions S11–S24 are enriched in basic and acidic residues. The ATP-cone domain occupies V49 to D139.

This sequence belongs to the NrdR family. Zn(2+) is required as a cofactor.

Negatively regulates transcription of bacterial ribonucleotide reductase nrd genes and operons by binding to NrdR-boxes. This chain is Transcriptional repressor NrdR, found in Novosphingobium aromaticivorans (strain ATCC 700278 / DSM 12444 / CCUG 56034 / CIP 105152 / NBRC 16084 / F199).